The sequence spans 132 residues: Nitrogenase iron-iron protein delta chain (132 aa).

Hexamer of two alpha, two beta, and two delta chains. Iron-sulfur cluster is required as a cofactor.

It carries out the reaction N2 + 8 reduced [2Fe-2S]-[ferredoxin] + 16 ATP + 16 H2O = H2 + 8 oxidized [2Fe-2S]-[ferredoxin] + 2 NH4(+) + 16 ADP + 16 phosphate + 6 H(+). Its function is as follows. The key enzymatic reactions in nitrogen fixation are catalyzed by the nitrogenase complex, which has 2 components: the iron protein (component 2) and a component 1 which is either a molybdenum-iron protein, a vanadium-iron, or an iron-iron protein. This chain is Nitrogenase iron-iron protein delta chain (anfG), found in Ruminiclostridium hungatei (Clostridium hungatei).